The primary structure comprises 166 residues: Thiol peroxidase (166 aa).

The Thioredoxin domain maps to 18–166 (LKVGDKAPDV…NYEALLKVLK (149 aa)). Residue C60 is the Cysteine sulfenic acid (-SOH) intermediate of the active site. C60 and C94 are joined by a disulfide.

The protein belongs to the peroxiredoxin family. Tpx subfamily. As to quaternary structure, homodimer.

It catalyses the reaction a hydroperoxide + [thioredoxin]-dithiol = an alcohol + [thioredoxin]-disulfide + H2O. Its function is as follows. Thiol-specific peroxidase that catalyzes the reduction of hydrogen peroxide and organic hydroperoxides to water and alcohols, respectively. Plays a role in cell protection against oxidative stress by detoxifying peroxides. The protein is Thiol peroxidase of Helicobacter pylori (strain J99 / ATCC 700824) (Campylobacter pylori J99).